The sequence spans 266 residues: Short-chain dehydrogenase/reductase atnB (266 aa).

Residues I13, D57, and N85 each contribute to the NADP(+) site. Residues S147 and Y166 each act as proton donor in the active site. Positions 166, 170, 199, and 201 each coordinate NADP(+). Catalysis depends on K170, which acts as the Lowers pKa of active site Tyr.

Belongs to the short-chain dehydrogenases/reductases (SDR) family.

It functions in the pathway secondary metabolite biosynthesis; terpenoid biosynthesis. In terms of biological role, short-chain dehydrogenase/reductase; part of the gene cluster that mediates the biosynthesis of the meroterpenoids arthripenoids. The pathway begins with the HR-PKS atnH that catalyzes two chain-extension steps to form a reduced triketide, which then primes the SAT domain in the NR-PKS atnG to initiate three more cycles of extension to give a linear hexaketide corresponding to the polyketide part of arthripenoids. The FAD-dependent monooxygenase atnJ then performs an oxidative decarboxylation at C11 of the atnH/atnG product, via an electrophilic aromatic hydroxylation with concomitant ipso-decarboxylation. The membrane-bound polyprenyl transferase atnF then introduces a farnesyl group before the FAD-dependent monooxygenase atnK functions as the first epoxidase on terminal C12'-C13' olefin, followed by a second epoxidation on C7'-C8' catalyzed by atnA. The terpene cyclase/mutase atnI then initiates the sequential tricyclic ring formation through protonation of the terminal epoxide and catalyzes the regioselective and stereoselective 6/6/6-tricyclic ring formation. The cytochrome P450 monooxygenase atnM is responsible for hydroxylating both C1' and C10'. The next steps may involve ketoreduction and acetyl transfer by the ketoreductase atnB and the acetyltransferase atnC, and lead to the production of arthripenoid B, the final biosynthetic product of the atn cluster. The hydroquinone moiety in arthripenoid B is prone to undergo spontaneous oxidation to afford a benzoquinone compound, a key intermediate for generating structure diversity. For instance, addition of a cysteine followed by ring contraction gives arthripenoid A, tautomerization gives the main product arthripenoid C, addition of a molecular of water or amine affords arthripenoid D or E, respectively, and loss of one water forms arthripenoid F. The protein is Short-chain dehydrogenase/reductase atnB of Arthrinium sp.